Here is a 197-residue protein sequence, read N- to C-terminus: Holliday junction branch migration complex subunit RuvA (197 aa).

The tract at residues M1–V63 is domain I. The interval D64–T139 is domain II. Positions T139–V143 are flexible linker. Positions N144 to R197 are domain III.

This sequence belongs to the RuvA family. Homotetramer. Forms an RuvA(8)-RuvB(12)-Holliday junction (HJ) complex. HJ DNA is sandwiched between 2 RuvA tetramers; dsDNA enters through RuvA and exits via RuvB. An RuvB hexamer assembles on each DNA strand where it exits the tetramer. Each RuvB hexamer is contacted by two RuvA subunits (via domain III) on 2 adjacent RuvB subunits; this complex drives branch migration. In the full resolvosome a probable DNA-RuvA(4)-RuvB(12)-RuvC(2) complex forms which resolves the HJ.

The protein localises to the cytoplasm. In terms of biological role, the RuvA-RuvB-RuvC complex processes Holliday junction (HJ) DNA during genetic recombination and DNA repair, while the RuvA-RuvB complex plays an important role in the rescue of blocked DNA replication forks via replication fork reversal (RFR). RuvA specifically binds to HJ cruciform DNA, conferring on it an open structure. The RuvB hexamer acts as an ATP-dependent pump, pulling dsDNA into and through the RuvAB complex. HJ branch migration allows RuvC to scan DNA until it finds its consensus sequence, where it cleaves and resolves the cruciform DNA. The chain is Holliday junction branch migration complex subunit RuvA from Mycobacterium marinum (strain ATCC BAA-535 / M).